We begin with the raw amino-acid sequence, 427 residues long: Serine--tRNA ligase (427 aa).

An L-serine-binding site is contributed by 231–233; the sequence is TAE. Residue 262–264 participates in ATP binding; that stretch reads RSE. Glu-285 serves as a coordination point for L-serine. Residue 349–352 coordinates ATP; that stretch reads EISS. Residue Ser-385 participates in L-serine binding.

The protein belongs to the class-II aminoacyl-tRNA synthetase family. Type-1 seryl-tRNA synthetase subfamily. In terms of assembly, homodimer. The tRNA molecule binds across the dimer.

The protein resides in the cytoplasm. It catalyses the reaction tRNA(Ser) + L-serine + ATP = L-seryl-tRNA(Ser) + AMP + diphosphate + H(+). It carries out the reaction tRNA(Sec) + L-serine + ATP = L-seryl-tRNA(Sec) + AMP + diphosphate + H(+). It participates in aminoacyl-tRNA biosynthesis; selenocysteinyl-tRNA(Sec) biosynthesis; L-seryl-tRNA(Sec) from L-serine and tRNA(Sec): step 1/1. Catalyzes the attachment of serine to tRNA(Ser). Is also able to aminoacylate tRNA(Sec) with serine, to form the misacylated tRNA L-seryl-tRNA(Sec), which will be further converted into selenocysteinyl-tRNA(Sec). This is Serine--tRNA ligase from Staphylococcus saprophyticus subsp. saprophyticus (strain ATCC 15305 / DSM 20229 / NCIMB 8711 / NCTC 7292 / S-41).